A 311-amino-acid chain; its full sequence is Probable inactive peptidyl-prolyl cis-trans isomerase-like 6 (311 aa).

The 164-residue stretch at 145–308 folds into the PPIase cyclophilin-type domain; the sequence is FLDICIDSSP…HMCRITDSGD (164 aa).

Belongs to the cyclophilin-type PPIase family.

Functionally, probable inactive PPIase with no peptidyl-prolyl cis-trans isomerase activity. The sequence is that of Probable inactive peptidyl-prolyl cis-trans isomerase-like 6 from Homo sapiens (Human).